The following is a 243-amino-acid chain: MHELTIYHFMSDKLNLYSDIGNIIALRQRAKKRNIKVNVVEINETEGITFDECDIFFIGGGSDREQALATKELSKIKTPLKEAIEDGMPGLTICGGYQFLGKKYITPDGTELEGLGILDFYTESKTNRLTGDIVIESDTFGTIVGFENHGGRTYHDFGTLGHVTFGYGNNDEDKKEGIHYKNLLGTYLHGPILPKNYEITDYLLEKACERKGIPFEPKEIDNEAEIQAKQVLIDRANRQKKSR.

The region spanning 6-197 (IYHFMSDKLN…LHGPILPKNY (192 aa)) is the GATase cobBQ-type domain. Catalysis depends on Cys-94, which acts as the Nucleophile. Arg-128 provides a ligand contact to substrate. His-189 is an active-site residue.

The protein belongs to the CobB/CobQ family. GatD subfamily. As to quaternary structure, forms a heterodimer with MurT.

The catalysed reaction is beta-D-GlcNAc-(1-&gt;4)-Mur2Ac(oyl-L-Ala-gamma-D-Glu-L-Lys-D-Ala-D-Ala)-di-trans,octa-cis-undecaprenyl diphosphate + L-glutamine + ATP + H2O = beta-D-GlcNAc-(1-&gt;4)-Mur2Ac(oyl-L-Ala-D-isoglutaminyl-L-Lys-D-Ala-D-Ala)-di-trans,octa-cis-undecaprenyl diphosphate + L-glutamate + ADP + phosphate + H(+). The enzyme catalyses L-glutamine + H2O = L-glutamate + NH4(+). It functions in the pathway cell wall biogenesis; peptidoglycan biosynthesis. The lipid II isoglutaminyl synthase complex catalyzes the formation of alpha-D-isoglutamine in the cell wall lipid II stem peptide. The GatD subunit catalyzes the hydrolysis of glutamine to glutamate and ammonia. The resulting ammonia molecule is channeled to the active site of MurT. The polypeptide is Lipid II isoglutaminyl synthase (glutamine-hydrolyzing) subunit GatD (Staphylococcus aureus (strain N315)).